We begin with the raw amino-acid sequence, 158 residues long: Cyclic pyranopterin monophosphate synthase (158 aa).

Substrate-binding positions include 75-77 (LCH) and 113-114 (ME). The active site involves aspartate 128.

Belongs to the MoaC family. As to quaternary structure, homohexamer; trimer of dimers.

It carries out the reaction (8S)-3',8-cyclo-7,8-dihydroguanosine 5'-triphosphate = cyclic pyranopterin phosphate + diphosphate. The protein operates within cofactor biosynthesis; molybdopterin biosynthesis. In terms of biological role, catalyzes the conversion of (8S)-3',8-cyclo-7,8-dihydroguanosine 5'-triphosphate to cyclic pyranopterin monophosphate (cPMP). In Actinobacillus pleuropneumoniae serotype 5b (strain L20), this protein is Cyclic pyranopterin monophosphate synthase.